Reading from the N-terminus, the 136-residue chain is Large-conductance mechanosensitive channel (136 aa).

A run of 2 helical transmembrane segments spans residues 9-29 (AFAS…GAAF) and 79-99 (IQTI…VKAI).

The protein belongs to the MscL family. As to quaternary structure, homopentamer.

It localises to the cell inner membrane. Its function is as follows. Channel that opens in response to stretch forces in the membrane lipid bilayer. May participate in the regulation of osmotic pressure changes within the cell. In Shewanella baltica (strain OS223), this protein is Large-conductance mechanosensitive channel.